The following is a 141-amino-acid chain: Large ribosomal subunit protein uL22 (141 aa).

Positions 110-141 are disordered; sequence EEKKTVAKKTTTTKAPAKKTTSTKKATAKKES. Low complexity predominate over residues 117–134; sequence KKTTTTKAPAKKTTSTKK.

Belongs to the universal ribosomal protein uL22 family. In terms of assembly, part of the 50S ribosomal subunit.

Functionally, this protein binds specifically to 23S rRNA; its binding is stimulated by other ribosomal proteins, e.g. L4, L17, and L20. It is important during the early stages of 50S assembly. It makes multiple contacts with different domains of the 23S rRNA in the assembled 50S subunit and ribosome. In terms of biological role, the globular domain of the protein is located near the polypeptide exit tunnel on the outside of the subunit, while an extended beta-hairpin is found that lines the wall of the exit tunnel in the center of the 70S ribosome. The polypeptide is Large ribosomal subunit protein uL22 (Campylobacter jejuni subsp. doylei (strain ATCC BAA-1458 / RM4099 / 269.97)).